A 345-amino-acid chain; its full sequence is Phosphoribosylformylglycinamidine cyclo-ligase (345 aa).

The protein belongs to the AIR synthase family.

It localises to the cytoplasm. The catalysed reaction is 2-formamido-N(1)-(5-O-phospho-beta-D-ribosyl)acetamidine + ATP = 5-amino-1-(5-phospho-beta-D-ribosyl)imidazole + ADP + phosphate + H(+). The protein operates within purine metabolism; IMP biosynthesis via de novo pathway; 5-amino-1-(5-phospho-D-ribosyl)imidazole from N(2)-formyl-N(1)-(5-phospho-D-ribosyl)glycinamide: step 2/2. The protein is Phosphoribosylformylglycinamidine cyclo-ligase of Bifidobacterium longum (strain DJO10A).